Reading from the N-terminus, the 202-residue chain is Na(+)-translocating NADH-quinone reductase subunit E (202 aa).

6 consecutive transmembrane segments (helical) span residues S11 to V31, L41 to F61, F81 to V101, G114 to V134, L144 to I164, and L180 to I200.

It belongs to the NqrDE/RnfAE family. Composed of six subunits; NqrA, NqrB, NqrC, NqrD, NqrE and NqrF.

It is found in the cell inner membrane. The catalysed reaction is a ubiquinone + n Na(+)(in) + NADH + H(+) = a ubiquinol + n Na(+)(out) + NAD(+). NQR complex catalyzes the reduction of ubiquinone-1 to ubiquinol by two successive reactions, coupled with the transport of Na(+) ions from the cytoplasm to the periplasm. NqrA to NqrE are probably involved in the second step, the conversion of ubisemiquinone to ubiquinol. This is Na(+)-translocating NADH-quinone reductase subunit E from Psychromonas ingrahamii (strain DSM 17664 / CCUG 51855 / 37).